A 99-amino-acid polypeptide reads, in one-letter code: Carboxysome shell vertex protein CcmL (99 aa).

The BMV domain maps to Met-1–Asp-83.

It belongs to the CcmL/EutN family. CcmL subfamily. Homopentamer. Interacts with full-length CcmM.

Its subcellular location is the carboxysome. Its function is as follows. Probably forms vertices in the carboxysome, a polyhedral inclusion where RuBisCO (ribulose bisphosphate carboxylase, rbcL-rbcS) is sequestered. Has been modeled to induce curvature upon insertion into an otherwise flat hexagonal molecular layer of CcmK subunits. Beta-carboxysome assembly initiates when soluble RuBisCO is condensed into a liquid matrix in a pre-carboxysome by the RbcS-like domains of probably both CcmM58 and CcmM35. CcmN interacts with the N-terminus of CcmM58, and then recruits the CcmK2 major shell protein via CcmN's encapsulation peptide. Shell formation requires CcmK proteins and CcmO. CcmL caps the otherwise elongated carboxysome. Once fully encapsulated carboxysomes are formed, they migrate within the cell probably via interactions with the cytoskeleton. This chain is Carboxysome shell vertex protein CcmL, found in Synechococcus elongatus (strain ATCC 33912 / PCC 7942 / FACHB-805) (Anacystis nidulans R2).